Reading from the N-terminus, the 337-residue chain is Biotin synthase (337 aa).

In terms of domain architecture, Radical SAM core spans 39–267 (QEVQVCTLLS…KAMVRLSAGR (229 aa)). Residues C54, C58, and C61 each contribute to the [4Fe-4S] cluster site. [2Fe-2S] cluster contacts are provided by C98, C130, C190, and R262.

The protein belongs to the radical SAM superfamily. Biotin synthase family. Homodimer. Requires [4Fe-4S] cluster as cofactor. [2Fe-2S] cluster is required as a cofactor.

It catalyses the reaction (4R,5S)-dethiobiotin + (sulfur carrier)-SH + 2 reduced [2Fe-2S]-[ferredoxin] + 2 S-adenosyl-L-methionine = (sulfur carrier)-H + biotin + 2 5'-deoxyadenosine + 2 L-methionine + 2 oxidized [2Fe-2S]-[ferredoxin]. Its pathway is cofactor biosynthesis; biotin biosynthesis; biotin from 7,8-diaminononanoate: step 2/2. In terms of biological role, catalyzes the conversion of dethiobiotin (DTB) to biotin by the insertion of a sulfur atom into dethiobiotin via a radical-based mechanism. The protein is Biotin synthase of Cytophaga hutchinsonii (strain ATCC 33406 / DSM 1761 / CIP 103989 / NBRC 15051 / NCIMB 9469 / D465).